The sequence spans 23 residues: Retinol-binding protein 3 (23 aa).

It localises to the secreted. The protein resides in the extracellular space. Its subcellular location is the extracellular matrix. The protein localises to the interphotoreceptor matrix. In terms of biological role, IRBP shuttles 11-cis and all trans retinoids between the retinol isomerase in the pigment epithelium and the visual pigments in the photoreceptor cells of the retina. This is Retinol-binding protein 3 (RBP3) from Oryctolagus cuniculus (Rabbit).